A 620-amino-acid chain; its full sequence is Synchronized import protein 1 (620 aa).

Residues methionine 1–valine 32 are disordered. ARM repeat units lie at residues aspartate 25–glutamate 64, alanine 66–leucine 106, aspartate 181–aspartate 221, alanine 258–proline 299, isoleucine 340–proline 386, aspartate 435–leucine 470, isoleucine 471–methionine 510, and arginine 564–serine 607.

It belongs to the nuclear import and ribosome assembly adapter family. As to quaternary structure, forms a heterotrimeric complex with RPL5 and RPL11A or RPL11B; interaction of this complex with KAP104 allows the nuclear import of the heterotrimer. Component of a hexameric 5S RNP precursor complex, composed of 5S RNA, RRS1, RPF2, RPL5, RPL11A/RPL11B and SYO1; this complex acts as a precursor for ribosome assembly.

The protein resides in the cytoplasm. It localises to the nucleus. In terms of biological role, nuclear import adapter that specifically recruits the two functionally and topologically linked ribosomal proteins RPL5 and RPL11 (encoded by RPL11A and RPL11B). Guarantees that this cargo pair remains bound together from the time of synthesis in the cytoplasm until delivery to the nascent 5S rRNA in the nucleus. The protein is Synchronized import protein 1 (SYO1) of Saccharomyces cerevisiae (strain ATCC 204508 / S288c) (Baker's yeast).